The sequence spans 492 residues: Transcript termination protein OPG145 (492 aa).

The 157-residue stretch at Met100 to Ser256 folds into the Helicase ATP-binding domain. An ATP-binding site is contributed by Leu113–Thr120. The DEAH box signature appears at Asp206–His209.

It belongs to the helicase family. Poxviruses subfamily. In terms of assembly, interacts with OPG087. Might be part of a transcription complex composed at least of OPG087, OPG110, and OPG145.

The protein localises to the virion. DNA helicase which seems to act as a postreplicative transcription termination factor. Involved in ATP-dependent release of nascent RNA. Forms a stable complex with single-stranded DNA, and to a lesser extent RNA. This chain is Transcript termination protein OPG145 (OPG145), found in Cynomys gunnisoni (Gunnison's prairie dog).